A 392-amino-acid chain; its full sequence is L-rhamnonate dehydratase (392 aa).

His22 and Arg48 together coordinate substrate. 3 residues coordinate Mg(2+): Asp214, Glu240, and Glu268. His318 functions as the Proton acceptor in the catalytic mechanism. Residue Glu338 participates in substrate binding.

Belongs to the mandelate racemase/muconate lactonizing enzyme family. RhamD subfamily. In terms of assembly, homooctamer; tetramer of dimers. Mg(2+) serves as cofactor.

The enzyme catalyses L-rhamnonate = 2-dehydro-3-deoxy-L-rhamnonate + H2O. Its function is as follows. Catalyzes the dehydration of L-rhamnonate to 2-keto-3-deoxy-L-rhamnonate (KDR). The protein is L-rhamnonate dehydratase of Burkholderia ambifaria (strain MC40-6).